The chain runs to 357 residues: Homoarginine-6-hydroxylase 2-ODD-C23.2 (357 aa).

Residues 208–308 enclose the Fe2OG dioxygenase domain; it reads PFWVMRIIGY…RVCVAFFYET (101 aa). Fe cation-binding residues include histidine 231, aspartate 233, and histidine 289. Residue arginine 299 coordinates 2-oxoglutarate.

It belongs to the iron/ascorbate-dependent oxidoreductase family. Fe(2+) serves as cofactor. As to expression, expressed in senescent leaves.

The protein resides in the cytoplasm. It localises to the cytosol. The catalysed reaction is L-homoarginine + 2-oxoglutarate + O2 = 6-hydroxy-L-homoarginine + succinate + CO2. The enzyme catalyses L-arginine + 2-oxoglutarate + O2 = 5-hydroxy-L-arginine + succinate + CO2. With respect to regulation, slightly inhibited by canavanine (Can), the 5-oxa-analog of arginine. 2-oxoglutarate-dependent dioxygenase catalyzing homoarginine 6-hydroxylation and arginine-5-hydroxylation thus producing 6-hydroxy-L-homoarginine and 5-hydroxy-L-arginine, respectively. Guanidine (Gd) is in turn synthesized by the spontaneous conversion of 6-hydroxy-L-homoarginine and 5-hydroxy-L-arginine to (S)-2-amino-6-oxohexanoate (RHEA:79843) and L-glutamate 5-semialdehyde (RHEA:31527); guanidine is a nitrogen-rich compound that may serve as a defense or signaling substance. This chain is Homoarginine-6-hydroxylase 2-ODD-C23.2, found in Arabidopsis thaliana (Mouse-ear cress).